The sequence spans 334 residues: N-acetyl-gamma-glutamyl-phosphate reductase (334 aa).

Cys-154 is an active-site residue.

This sequence belongs to the NAGSA dehydrogenase family. Type 1 subfamily.

The protein resides in the cytoplasm. It carries out the reaction N-acetyl-L-glutamate 5-semialdehyde + phosphate + NADP(+) = N-acetyl-L-glutamyl 5-phosphate + NADPH + H(+). Its pathway is amino-acid biosynthesis; L-arginine biosynthesis; N(2)-acetyl-L-ornithine from L-glutamate: step 3/4. Catalyzes the NADPH-dependent reduction of N-acetyl-5-glutamyl phosphate to yield N-acetyl-L-glutamate 5-semialdehyde. The sequence is that of N-acetyl-gamma-glutamyl-phosphate reductase from Vibrio parahaemolyticus serotype O3:K6 (strain RIMD 2210633).